Consider the following 282-residue polypeptide: Protein DOG1-like 3 (282 aa).

Residues 11–254 (EQLQKGCYYE…HEWGRVREEQ (244 aa)) enclose the DOG1 domain.

This is Protein DOG1-like 3 from Arabidopsis thaliana (Mouse-ear cress).